A 276-amino-acid chain; its full sequence is MDRLHTSSADWPDHLATQVVRVRGGVLQAAGQSDHVAEETPVALEFNGISHATMLVTPTHLDDFALGFALTEGIVGGMADVRGVELETRCDGIVVQVEIATSCEVRLKERRRAMAGRTGCGLCGVETLPEVVRDVAPAADSDALPVHNVLRAMQSLRSRQTLHDATGATHAAGWADASGEVVLAREDVGRHNALDKLIGALARQGIAPLPGMAVVSSRASFEMVQKTASAGIPILAAVSAPTALAIRLARQTNVTLLGFVRNTDATIYSHPQRIAA.

Residue Cys120 is the Cysteine persulfide intermediate of the active site.

Belongs to the FdhD family.

The protein localises to the cytoplasm. In terms of biological role, required for formate dehydrogenase (FDH) activity. Acts as a sulfur carrier protein that transfers sulfur from IscS to the molybdenum cofactor prior to its insertion into FDH. In Bordetella parapertussis (strain 12822 / ATCC BAA-587 / NCTC 13253), this protein is Sulfur carrier protein FdhD.